Consider the following 1137-residue polypeptide: Phytochrome C (1137 aa).

Positions 1–18 are enriched in low complexity; that stretch reads MSSSRSNNRATCSRSSSA. The disordered stretch occupies residues 1-27; that stretch reads MSSSRSNNRATCSRSSSARSKHSARVV. A GAF domain is found at 217–400; sequence NLSLLCDVLV…VFGIQINKEV (184 aa). Phytochromobilin is bound at residue Cys-322. PAS domains lie at 620 to 690 and 750 to 824; these read VTNE…LQGI and IQGD…TKLS. Residues 904 to 1124 enclose the Histidine kinase domain; sequence YIRQELRNPL…IVLVEFPVAQ (221 aa).

It belongs to the phytochrome family. Homodimer. In terms of processing, contains one covalently linked phytochromobilin chromophore.

Functionally, regulatory photoreceptor which exists in two forms that are reversibly interconvertible by light: the Pr form that absorbs maximally in the red region of the spectrum and the Pfr form that absorbs maximally in the far-red region. Photoconversion of Pr to Pfr induces an array of morphogenic responses, whereas reconversion of Pfr to Pr cancels the induction of those responses. Pfr controls the expression of a number of nuclear genes including those encoding the small subunit of ribulose-bisphosphate carboxylase, chlorophyll A/B binding protein, protochlorophyllide reductase, rRNA, etc. It also controls the expression of its own gene(s) in a negative feedback fashion. In Oryza sativa subsp. japonica (Rice), this protein is Phytochrome C (PHYC).